Consider the following 168-residue polypeptide: G/U mismatch-specific DNA glycosylase (168 aa).

Belongs to the uracil-DNA glycosylase (UDG) superfamily. TDG/mug family. Binds DNA as a monomer.

It is found in the cytoplasm. It catalyses the reaction Specifically hydrolyzes mismatched double-stranded DNA and polynucleotides, releasing free uracil.. In terms of biological role, excises ethenocytosine and uracil, which can arise by alkylation or deamination of cytosine, respectively, from the corresponding mispairs with guanine in ds-DNA. It is capable of hydrolyzing the carbon-nitrogen bond between the sugar-phosphate backbone of the DNA and the mispaired base. The complementary strand guanine functions in substrate recognition. Required for DNA damage lesion repair in stationary-phase cells. The protein is G/U mismatch-specific DNA glycosylase of Escherichia coli O9:H4 (strain HS).